The following is a 298-amino-acid chain: ATP phosphoribosyltransferase (298 aa).

The protein belongs to the ATP phosphoribosyltransferase family. Long subfamily. Mg(2+) is required as a cofactor.

It localises to the cytoplasm. The enzyme catalyses 1-(5-phospho-beta-D-ribosyl)-ATP + diphosphate = 5-phospho-alpha-D-ribose 1-diphosphate + ATP. It functions in the pathway amino-acid biosynthesis; L-histidine biosynthesis; L-histidine from 5-phospho-alpha-D-ribose 1-diphosphate: step 1/9. Feedback inhibited by histidine. Catalyzes the condensation of ATP and 5-phosphoribose 1-diphosphate to form N'-(5'-phosphoribosyl)-ATP (PR-ATP). Has a crucial role in the pathway because the rate of histidine biosynthesis seems to be controlled primarily by regulation of HisG enzymatic activity. The protein is ATP phosphoribosyltransferase of Aeromonas hydrophila subsp. hydrophila (strain ATCC 7966 / DSM 30187 / BCRC 13018 / CCUG 14551 / JCM 1027 / KCTC 2358 / NCIMB 9240 / NCTC 8049).